The following is a 432-amino-acid chain: MISAAQLLDELMGRDRNLAPDEKRSNVRWDHESVCKYYLCGFCPAELFTNTRSDLGPCEKIHDENLRKQYEKSSRFMKVGYERDFLRYLQSLLAEVERRIRRGHARLALSQNQQSSGAAGPTGKNEEKIQVLTDKIDVLLQQIEELGSEGKVEEAQGMMKLVEQLKEERELLRSTTSTIESFAAQEKQMEVCEVCGAFLIVGDAQSRVDDHLMGKQHMGYAKIKATVEELKEKLRKRTEEPDRDERLKKEKQEREEREKEREREREERERKRRREEEEREKERARDRERRKRSRSRSRHSSRTSDRRCSRSRDHKRSRSRERRRSRSRDRRRSRSHDRSERKHRSRSRDRRRSKSRDRKSYKHRSKSRDREQDRKSKEKEKRGSDDKKSSVKSSSREKQSEDTNTESKESDTKNEVNGTSEDIKSEGDTQSN.

Met-1 bears the N-acetylmethionine mark. Phosphoserine occurs at positions 3, 110, and 115. Residues 124–181 are a coiled coil; sequence KNEEKIQVLTDKIDVLLQQIEELGSEGKVEEAQGMMKLVEQLKEERELLRSTTSTIES. Lys-231 carries the N6-acetyllysine modification. The span at 234–287 shows a compositional bias: basic and acidic residues; the sequence is LRKRTEEPDRDERLKKEKQEREEREKEREREREERERKRRREEEEREKERARDR. The disordered stretch occupies residues 234-432; sequence LRKRTEEPDR…IKSEGDTQSN (199 aa). The segment covering 288-301 has biased composition (basic residues); the sequence is ERRKRSRSRSRHSS. The span at 302–311 shows a compositional bias: basic and acidic residues; the sequence is RTSDRRCSRS. Residues 312-367 are compositionally biased toward basic residues; sequence RDHKRSRSRERRRSRSRDRRRSRSHDRSERKHRSRSRDRRRSKSRDRKSYKHRSKS. Basic and acidic residues predominate over residues 368 to 414; the sequence is RDREQDRKSKEKEKRGSDDKKSSVKSSSREKQSEDTNTESKESDTKN. Phosphoserine is present on Ser-420. The span at 421 to 432 shows a compositional bias: basic and acidic residues; it reads EDIKSEGDTQSN. A Glycyl lysine isopeptide (Lys-Gly) (interchain with G-Cter in SUMO1); alternate cross-link involves residue Lys-424. Lys-424 is covalently cross-linked (Glycyl lysine isopeptide (Lys-Gly) (interchain with G-Cter in SUMO2); alternate). Ser-425 and Ser-431 each carry phosphoserine.

This sequence belongs to the Luc7 family. As to quaternary structure, may interact with SFRS1 and form homodimers. Interacts with JMJD6. Interacts with RBM25. Interacts with RSRC1 (via Arg/Ser-rich domain). Interacts with RRP1B.

The protein localises to the nucleus speckle. Binds cAMP regulatory element DNA sequence. May play a role in RNA splicing. In Bos taurus (Bovine), this protein is Luc7-like protein 3 (LUC7L3).